The chain runs to 946 residues: Bifunctional glutamine synthetase adenylyltransferase/adenylyl-removing enzyme (946 aa).

Residues 1–440 (MKPLSSPLQQ…VFNELIGDDE (440 aa)) form an adenylyl removase region. Residues 449–946 (SEQWRELWQD…ASWQKWLVEE (498 aa)) form an adenylyl transferase region.

Belongs to the GlnE family. Mg(2+) serves as cofactor.

It catalyses the reaction [glutamine synthetase]-O(4)-(5'-adenylyl)-L-tyrosine + phosphate = [glutamine synthetase]-L-tyrosine + ADP. It carries out the reaction [glutamine synthetase]-L-tyrosine + ATP = [glutamine synthetase]-O(4)-(5'-adenylyl)-L-tyrosine + diphosphate. Its function is as follows. Involved in the regulation of glutamine synthetase GlnA, a key enzyme in the process to assimilate ammonia. When cellular nitrogen levels are high, the C-terminal adenylyl transferase (AT) inactivates GlnA by covalent transfer of an adenylyl group from ATP to specific tyrosine residue of GlnA, thus reducing its activity. Conversely, when nitrogen levels are low, the N-terminal adenylyl removase (AR) activates GlnA by removing the adenylyl group by phosphorolysis, increasing its activity. The regulatory region of GlnE binds the signal transduction protein PII (GlnB) which indicates the nitrogen status of the cell. The polypeptide is Bifunctional glutamine synthetase adenylyltransferase/adenylyl-removing enzyme (Escherichia coli (strain SE11)).